The chain runs to 100 residues: Urease subunit gamma (100 aa).

Belongs to the urease gamma subunit family. As to quaternary structure, heterotrimer of UreA (gamma), UreB (beta) and UreC (alpha) subunits. Three heterotrimers associate to form the active enzyme.

The protein resides in the cytoplasm. It catalyses the reaction urea + 2 H2O + H(+) = hydrogencarbonate + 2 NH4(+). The protein operates within nitrogen metabolism; urea degradation; CO(2) and NH(3) from urea (urease route): step 1/1. This Teredinibacter turnerae (strain ATCC 39867 / T7901) protein is Urease subunit gamma.